A 164-amino-acid polypeptide reads, in one-letter code: Phosphopantetheine adenylyltransferase (164 aa).

Thr14 contacts substrate. ATP is bound by residues 14 to 15 (TF) and His22. Residues Lys46, Met78, and Arg92 each contribute to the substrate site. ATP is bound by residues 93–95 (GLR), Glu103, and 128–134 (HAFISST).

It belongs to the bacterial CoaD family. Homohexamer. Mg(2+) serves as cofactor.

It localises to the cytoplasm. It carries out the reaction (R)-4'-phosphopantetheine + ATP + H(+) = 3'-dephospho-CoA + diphosphate. It functions in the pathway cofactor biosynthesis; coenzyme A biosynthesis; CoA from (R)-pantothenate: step 4/5. Functionally, reversibly transfers an adenylyl group from ATP to 4'-phosphopantetheine, yielding dephospho-CoA (dPCoA) and pyrophosphate. The sequence is that of Phosphopantetheine adenylyltransferase from Vibrio vulnificus (strain CMCP6).